The primary structure comprises 357 residues: Heat-inducible transcription repressor HrcA (357 aa).

It belongs to the HrcA family.

In terms of biological role, negative regulator of class I heat shock genes (grpE-dnaK-dnaJ and groELS operons). Prevents heat-shock induction of these operons. The polypeptide is Heat-inducible transcription repressor HrcA (Chlorobium phaeobacteroides (strain DSM 266 / SMG 266 / 2430)).